A 311-amino-acid polypeptide reads, in one-letter code: Apulose-4-phosphate transketolase subunit B (311 aa).

It belongs to the transketolase family. As to quaternary structure, probable heterodimer composed of AptA and AptB. Requires thiamine diphosphate as cofactor.

The catalysed reaction is apulose 4-phosphate + D-glyceraldehyde 3-phosphate = D-xylulose 5-phosphate + dihydroxyacetone phosphate. Its pathway is carbohydrate metabolism. Its function is as follows. Involved in catabolism of D-apiose. Catalyzes the transfer of the glycolaldehyde group from apulose-4-phosphate to D-glyceraldehyde 3-phosphate, generating dihydroxyacetone phosphate and D-xylulose-5-phosphate. This chain is Apulose-4-phosphate transketolase subunit B, found in Actinobacillus succinogenes (strain ATCC 55618 / DSM 22257 / CCUG 43843 / 130Z).